The chain runs to 182 residues: Small ribosomal subunit protein uS5 (182 aa).

One can recognise an S5 DRBM domain in the interval 16 to 79 (FVDRLVHINR…ESAKRGMIYV (64 aa)).

It belongs to the universal ribosomal protein uS5 family. Part of the 30S ribosomal subunit. Contacts proteins S4 and S8.

With S4 and S12 plays an important role in translational accuracy. In terms of biological role, located at the back of the 30S subunit body where it stabilizes the conformation of the head with respect to the body. The polypeptide is Small ribosomal subunit protein uS5 (Bartonella henselae (strain ATCC 49882 / DSM 28221 / CCUG 30454 / Houston 1) (Rochalimaea henselae)).